The following is a 61-amino-acid chain: Large ribosomal subunit protein uL29 (61 aa).

The protein belongs to the universal ribosomal protein uL29 family.

The polypeptide is Large ribosomal subunit protein uL29 (Campylobacter lari (strain RM2100 / D67 / ATCC BAA-1060)).